The following is a 206-amino-acid chain: MNGVRDPPLFIKDIKPGLKNLNVVFIVLEIGRVTKTKDGHEVRSCKVADKTGSITISVWDEIGGLIQPGDIIRLTRGYASMWKGCLTLYTGRGGELQKIGEFCMVYSELPNFSEPNPDYRGQQNKGAHNEQKNNSMNNSNNVGTGTFGPMGNGVQTGAEARGCQFSYAGRSNGRGPINPQLPGTANNQTVMTTISNGRDPRRAFKR.

A DNA-binding region (OB) is located at residues 26–89; the sequence is IVLEIGRVTK…SMWKGCLTLY (64 aa). Disordered regions lie at residues 114 to 146 and 166 to 206; these read EPNPDYRGQQNKGAHNEQKNNSMNNSNNVGTGT and SYAG…AFKR. The segment covering 181 to 196 has biased composition (polar residues); the sequence is LPGTANNQTVMTTISN.

Belongs to the SOSS-B family. SOSS-B2 subfamily. Component of the SOSS complex, composed of SOSS-B (SOSS-B1/NABP2 or SOSS-B2/NABP1), SOSS-A/INTS3 and SOSS-C/INIP. SOSS complexes containing SOSS-B1/NABP2 are more abundant than complexes containing SOSS-B2/NABP1.

The protein localises to the nucleus. Functionally, component of the SOSS complex, a multiprotein complex that functions downstream of the MRN complex to promote DNA repair and G2/M checkpoint. In the SOSS complex, acts as a sensor of single-stranded DNA that binds to single-stranded DNA, in particular to polypyrimidines. The SOSS complex associates with DNA lesions and influences diverse endpoints in the cellular DNA damage response including cell-cycle checkpoint activation, recombinational repair and maintenance of genomic stability. Required for efficient homologous recombination-dependent repair of double-strand breaks (DSBs) and ATM-dependent signaling pathways. In Bos taurus (Bovine), this protein is SOSS complex subunit B2 (NABP1).